The primary structure comprises 448 residues: Histidine--tRNA ligase (448 aa).

Belongs to the class-II aminoacyl-tRNA synthetase family. In terms of assembly, homodimer.

It is found in the cytoplasm. It catalyses the reaction tRNA(His) + L-histidine + ATP = L-histidyl-tRNA(His) + AMP + diphosphate + H(+). This Treponema denticola (strain ATCC 35405 / DSM 14222 / CIP 103919 / JCM 8153 / KCTC 15104) protein is Histidine--tRNA ligase.